The chain runs to 232 residues: Modulator of macroautophagy TMEM150B (232 aa).

Over 1–6 (MWAWAL) the chain is Cytoplasmic. Residues 7-27 (LPVFLAVFGTVGLWAVYAIAV) form a helical membrane-spanning segment. Topologically, residues 28-50 (SNNSVNITIEFPYISTCGAYTPQ) are extracellular. Residues Asn-29 and Asn-33 are each glycosylated (N-linked (GlcNAc...) asparagine). Residues 51–71 (SCLFAQICNICCVLALWIVVI) traverse the membrane as a helical segment. Residues 72–83 (RFQQIRDLGRSS) are Cytoplasmic-facing. A helical transmembrane segment spans residues 84–104 (HLNTAGLVLGFISSIGISILG). Topologically, residues 105–115 (NFQQTIIQEVH) are extracellular. A helical membrane pass occupies residues 116 to 136 (LLGALMAFFLGLAYFWIQAFI). Over 137 to 153 (TYFSPPSRDNKWLVPVR) the chain is Cytoplasmic. Residues 154–174 (FVLCSQCTCMVICMFVLHSTG) traverse the membrane as a helical segment. The Extracellular portion of the chain corresponds to 175–177 (FRS). The chain crosses the membrane as a helical span at residues 178 to 198 (AAAICEWILVMCFFALFGVFA). Residues 199–232 (AEFRHIDFHKLTVQKEGLKVANNDNVVWTVQDVQ) lie on the Cytoplasmic side of the membrane.

It belongs to the DRAM/TMEM150 family.

It is found in the cell membrane. The protein localises to the endosome membrane. It localises to the cytoplasmic vesicle. The protein resides in the autophagosome membrane. Functionally, modulator of macroautophagy that causes accumulation of autophagosomes under basal conditions and enhances autophagic flux. Represses cell death and promotes long-term clonogenic survival of cells grown in the absence of glucose in a macroautophagy-independent manner. May have some role in extracellular matrix engulfment or growth factor receptor recycling, both of which can modulate cell survival. The sequence is that of Modulator of macroautophagy TMEM150B from Danio rerio (Zebrafish).